Reading from the N-terminus, the 393-residue chain is NAD(P)H-quinone oxidoreductase subunit H, chloroplastic (393 aa).

This sequence belongs to the complex I 49 kDa subunit family. As to quaternary structure, NDH is composed of at least 16 different subunits, 5 of which are encoded in the nucleus.

The protein localises to the plastid. It is found in the chloroplast thylakoid membrane. The enzyme catalyses a plastoquinone + NADH + (n+1) H(+)(in) = a plastoquinol + NAD(+) + n H(+)(out). It catalyses the reaction a plastoquinone + NADPH + (n+1) H(+)(in) = a plastoquinol + NADP(+) + n H(+)(out). Its function is as follows. NDH shuttles electrons from NAD(P)H:plastoquinone, via FMN and iron-sulfur (Fe-S) centers, to quinones in the photosynthetic chain and possibly in a chloroplast respiratory chain. The immediate electron acceptor for the enzyme in this species is believed to be plastoquinone. Couples the redox reaction to proton translocation, and thus conserves the redox energy in a proton gradient. In Lolium perenne (Perennial ryegrass), this protein is NAD(P)H-quinone oxidoreductase subunit H, chloroplastic.